We begin with the raw amino-acid sequence, 474 residues long: ATP synthase subunit beta (474 aa).

153-160 (GGAGVGKT) provides a ligand contact to ATP.

It belongs to the ATPase alpha/beta chains family. In terms of assembly, F-type ATPases have 2 components, CF(1) - the catalytic core - and CF(0) - the membrane proton channel. CF(1) has five subunits: alpha(3), beta(3), gamma(1), delta(1), epsilon(1). CF(0) has three main subunits: a(1), b(2) and c(9-12). The alpha and beta chains form an alternating ring which encloses part of the gamma chain. CF(1) is attached to CF(0) by a central stalk formed by the gamma and epsilon chains, while a peripheral stalk is formed by the delta and b chains.

It localises to the cell inner membrane. The enzyme catalyses ATP + H2O + 4 H(+)(in) = ADP + phosphate + 5 H(+)(out). Functionally, produces ATP from ADP in the presence of a proton gradient across the membrane. The catalytic sites are hosted primarily by the beta subunits. In Rickettsia prowazekii (strain Madrid E), this protein is ATP synthase subunit beta.